Here is an 88-residue protein sequence, read N- to C-terminus: MPKHSPPDTSPVARFEQSLQELEQLVQNMETGALSLEQSLGAYERGIALYRECHQALEQAQLRVRLLSDPMHPDDGEPFDPSLVSTSQ.

A disordered region spans residues 68 to 88 (SDPMHPDDGEPFDPSLVSTSQ).

It belongs to the XseB family. As to quaternary structure, heterooligomer composed of large and small subunits.

The protein localises to the cytoplasm. The catalysed reaction is Exonucleolytic cleavage in either 5'- to 3'- or 3'- to 5'-direction to yield nucleoside 5'-phosphates.. Bidirectionally degrades single-stranded DNA into large acid-insoluble oligonucleotides, which are then degraded further into small acid-soluble oligonucleotides. The polypeptide is Exodeoxyribonuclease 7 small subunit (Xylella fastidiosa (strain 9a5c)).